The chain runs to 221 residues: 7-cyano-7-deazaguanine synthase (221 aa).

Position 10–20 (10–20) interacts with ATP; it reads FSGGQDSTTCL. The Zn(2+) site is built by Cys186, Cys195, Cys198, and Cys201.

It belongs to the QueC family. Homodimer. Requires Zn(2+) as cofactor.

It carries out the reaction 7-carboxy-7-deazaguanine + NH4(+) + ATP = 7-cyano-7-deazaguanine + ADP + phosphate + H2O + H(+). It participates in purine metabolism; 7-cyano-7-deazaguanine biosynthesis. Functionally, catalyzes the ATP-dependent conversion of 7-carboxy-7-deazaguanine (CDG) to 7-cyano-7-deazaguanine (preQ(0)). The chain is 7-cyano-7-deazaguanine synthase from Geobacillus thermodenitrificans (strain NG80-2).